Reading from the N-terminus, the 527-residue chain is MEWIADPSIWAGLITLIVIELVLGIDNLVFIAILAEKLPPKQRDRARVTGLLLAMLMRLLLLASISWLVTLTQPLFSFRSFTFSARDLIMLFGGFFLLFKATMELNERLEGKDSNNPTQRKGAKFWGVVTQIVVLDAIFSLDSVITAVGMVDHLLVMMAAVVIAISLMLMASKPLTQFVNSHPTIVILCLSFLLMIGFSLVAEGFGFVIPKGYLYAAIGFSVMIEALNQLAIFNRRRFLSANQTLRQRTTEAVMRLLSGQKEDAELDAKTASMLVDHGNQQIFNPQERRMIERVLNLNQRTVSSIMTSRHDIEHIDLNAPEEEIRQLLERNQHTRLVVTDGDDAEDLLGVVHVIDLLQQSLRGEPLNLRVLIRQPLVFPETLPLLPALEQFRNARTHFAFVVDEFGSVEGIVTLSDVTETIAGNLPNEVEEIDARHDIQKNADGSWTANGHMPLEDLVQYVPLPLDEKREYHTIAGLLMEYLQRIPKPGEEVQVGDYLLKTLQVESHRVQKVQIIPLRKDGEMEYEV.

The next 7 helical transmembrane spans lie at 14–34 (ITLIVIELVLGIDNLVFIAIL), 51–71 (LLLAMLMRLLLLASISWLVTL), 81–101 (FTFSARDLIMLFGGFFLLFKA), 122–142 (GAKFWGVVTQIVVLDAIFSLD), 145–165 (ITAVGMVDHLLVMMAAVVIAI), 185–205 (IVILCLSFLLMIGFSLVAEGF), and 207–227 (FVIPKGYLYAAIGFSVMIEAL). 2 CBS domains span residues 306-366 (MTSR…GEPL) and 371-429 (LIRQ…PNEV).

This sequence belongs to the UPF0053 family.

The protein localises to the cell membrane. This Shigella flexneri protein is UPF0053 protein YegH (yegH).